A 352-amino-acid polypeptide reads, in one-letter code: Glycogen synthase kinase 3 (352 aa).

In terms of domain architecture, Protein kinase spans 20–310 (YTVERVAGQG…PLDALCHPFF (291 aa)). ATP-binding positions include 26–34 (AGQGTFGTV) and lysine 49. Catalysis depends on aspartate 152, which acts as the Proton acceptor.

This sequence belongs to the protein kinase superfamily. CMGC Ser/Thr protein kinase family. GSK-3 subfamily. As to quaternary structure, inhibited by cyclin kinase 2 (CDK2) inhibitors, including GW8510.

The catalysed reaction is L-seryl-[tau protein] + ATP = O-phospho-L-seryl-[tau protein] + ADP + H(+). It carries out the reaction L-threonyl-[tau protein] + ATP = O-phospho-L-threonyl-[tau protein] + ADP + H(+). The polypeptide is Glycogen synthase kinase 3 (Trypanosoma brucei brucei (strain 927/4 GUTat10.1)).